The following is a 384-amino-acid chain: Galactokinase (384 aa).

34–37 (EHTD) contributes to the substrate binding site. An ATP-binding site is contributed by 123–129 (SSGLSSS). Residues Ser129 and Glu161 each coordinate Mg(2+). The Proton acceptor role is filled by Asp173. Residue Tyr222 coordinates substrate.

The protein belongs to the GHMP kinase family. GalK subfamily.

The protein resides in the cytoplasm. The catalysed reaction is alpha-D-galactose + ATP = alpha-D-galactose 1-phosphate + ADP + H(+). It functions in the pathway carbohydrate metabolism; galactose metabolism. In terms of biological role, catalyzes the transfer of the gamma-phosphate of ATP to D-galactose to form alpha-D-galactose-1-phosphate (Gal-1-P). This Glaesserella parasuis serovar 5 (strain SH0165) (Haemophilus parasuis) protein is Galactokinase.